Consider the following 204-residue polypeptide: FMN-dependent NADH:quinone oxidoreductase (204 aa).

Residues Ser9, 15 to 17 (SVS), and 97 to 100 (MYNF) each bind FMN.

This sequence belongs to the azoreductase type 1 family. Homodimer. Requires FMN as cofactor.

It catalyses the reaction 2 a quinone + NADH + H(+) = 2 a 1,4-benzosemiquinone + NAD(+). The catalysed reaction is N,N-dimethyl-1,4-phenylenediamine + anthranilate + 2 NAD(+) = 2-(4-dimethylaminophenyl)diazenylbenzoate + 2 NADH + 2 H(+). Its function is as follows. Quinone reductase that provides resistance to thiol-specific stress caused by electrophilic quinones. Also exhibits azoreductase activity. Catalyzes the reductive cleavage of the azo bond in aromatic azo compounds to the corresponding amines. In Methylobacterium radiotolerans (strain ATCC 27329 / DSM 1819 / JCM 2831 / NBRC 15690 / NCIMB 10815 / 0-1), this protein is FMN-dependent NADH:quinone oxidoreductase.